The sequence spans 416 residues: Splicing factor U2AF 50 kDa subunit (416 aa).

Residues 1 to 10 (MGYDDRERDR) show a composition bias toward basic and acidic residues. Residues 1–47 (MGYDDRERDRERRRHRSRSRDRHRERSRDRRHHRNSRRKPSLYWDVP) form a disordered region. 2 stretches are compositionally biased toward basic residues: residues 11-21 (ERRRHRSRSRD) and 29-40 (DRRHHRNSRRKP). RRM domains follow at residues 93 to 175 (RRLY…RPHD), 207 to 285 (HKIF…RASV), and 318 to 408 (EVLC…YFDP).

Belongs to the splicing factor SR family. Forms a heterodimer with the U2AF small subunit.

It is found in the nucleus. Functionally, necessary for the splicing of pre-mRNA. Binds to the polypyrimidine tract of introns early during spliceosome assembly. In Drosophila melanogaster (Fruit fly), this protein is Splicing factor U2AF 50 kDa subunit (U2af50).